We begin with the raw amino-acid sequence, 294 residues long: 33 kDa chaperonin (294 aa).

Disulfide bonds link C239–C241 and C272–C275.

The protein belongs to the HSP33 family. Under oxidizing conditions two disulfide bonds are formed involving the reactive cysteines. Under reducing conditions zinc is bound to the reactive cysteines and the protein is inactive.

The protein resides in the cytoplasm. In terms of biological role, redox regulated molecular chaperone. Protects both thermally unfolding and oxidatively damaged proteins from irreversible aggregation. Plays an important role in the bacterial defense system toward oxidative stress. The sequence is that of 33 kDa chaperonin from Listeria monocytogenes serotype 4a (strain HCC23).